The following is a 393-amino-acid chain: Sugar efflux transporter B (393 aa).

A run of 12 helical transmembrane segments spans residues 13 to 33 (FDLTSTAFLIVAFLTGIAGAL), 51 to 71 (AMVGFFFTGSAVIGILVSQFL), 82 to 102 (KSLIVFCCLLGVLACTLFAWN), 106 to 126 (FVLLFVGVFLSSFGSTANPQM), 152 to 172 (VSLAWVIGPPLAYALAMGFSF), 174 to 194 (VMYLSAAVAFIVCGVMVWLFL), 219 to 239 (LLLFVICTLMWGSNSLYIINM), 253 to 273 (LAGVMMGTAAGLEIPTMLIAG), 283 to 303 (FLMRVAAVGGVCFYAGMLMAH), 306 to 326 (VILLGLQLLNAIFIGILGGIG), 344 to 364 (LYTNTSRVGWIIAGSVAGIVA), and 366 to 386 (IWNYHAVFWFAMVMIIATLFC).

The protein belongs to the major facilitator superfamily. Set transporter family.

It localises to the cell inner membrane. In terms of biological role, involved in the efflux of sugars. The physiological role may be the detoxification of non-metabolizable sugar analogs. Can transport lactose and glucose. The protein is Sugar efflux transporter B (setB) of Escherichia coli (strain K12).